The primary structure comprises 250 residues: Large ribosomal subunit protein uL4 (250 aa).

Disordered regions lie at residues 1–20 (MQVT…DLPR) and 51–101 (YAGL…HGLD). A compositionally biased stretch (basic and acidic residues) spans 92-101 (PKAEKDHGLD).

Belongs to the universal ribosomal protein uL4 family. In terms of assembly, part of the 50S ribosomal subunit.

In terms of biological role, one of the primary rRNA binding proteins, this protein initially binds near the 5'-end of the 23S rRNA. It is important during the early stages of 50S assembly. It makes multiple contacts with different domains of the 23S rRNA in the assembled 50S subunit and ribosome. Its function is as follows. Forms part of the polypeptide exit tunnel. This chain is Large ribosomal subunit protein uL4, found in Halobacterium salinarum (strain ATCC 29341 / DSM 671 / R1).